Here is a 386-residue protein sequence, read N- to C-terminus: Formate-dependent phosphoribosylglycinamide formyltransferase (386 aa).

N(1)-(5-phospho-beta-D-ribosyl)glycinamide-binding positions include 15–16 and Glu75; that span reads EL. ATP is bound by residues Arg107, Lys148, 153-158, 188-191, and Glu196; these read SSGKGQ and EQFI. In terms of domain architecture, ATP-grasp spans 112–301; sequence ALAAQQLNLQ…EFELHLRAIV (190 aa). Mg(2+)-binding residues include Glu260 and Glu272. N(1)-(5-phospho-beta-D-ribosyl)glycinamide-binding positions include Asp279, Lys349, and 356-357; that span reads RR.

It belongs to the PurK/PurT family. As to quaternary structure, homodimer.

It catalyses the reaction N(1)-(5-phospho-beta-D-ribosyl)glycinamide + formate + ATP = N(2)-formyl-N(1)-(5-phospho-beta-D-ribosyl)glycinamide + ADP + phosphate + H(+). Its pathway is purine metabolism; IMP biosynthesis via de novo pathway; N(2)-formyl-N(1)-(5-phospho-D-ribosyl)glycinamide from N(1)-(5-phospho-D-ribosyl)glycinamide (formate route): step 1/1. Involved in the de novo purine biosynthesis. Catalyzes the transfer of formate to 5-phospho-ribosyl-glycinamide (GAR), producing 5-phospho-ribosyl-N-formylglycinamide (FGAR). Formate is provided by PurU via hydrolysis of 10-formyl-tetrahydrofolate. The protein is Formate-dependent phosphoribosylglycinamide formyltransferase of Francisella tularensis subsp. novicida (strain U112).